Consider the following 253-residue polypeptide: MLNKRVIPCLDVNNGRVVKGTSFVNLRDAGNPVELAARYYREGADELVFLDISATTEERKTMAEVVEQVSKEVFIPLCVGGGLRSIADMNTLLRAGADKVSINSAAVSDPDLISRGAEKFGRQCIVVAIDAKREGSGWQVYTHSGKKPAGLDAVEWAIKAEALGAGEILLTSIDADGKNTGYDNELNREISSRLNIPVIASGGAGSPEDLYNALDKGQADAVLAASIFHYGRYTIAEVKQYLKSKGLPVRLEN.

Residues D11 and D130 contribute to the active site.

Belongs to the HisA/HisF family. In terms of assembly, heterodimer of HisH and HisF.

Its subcellular location is the cytoplasm. It carries out the reaction 5-[(5-phospho-1-deoxy-D-ribulos-1-ylimino)methylamino]-1-(5-phospho-beta-D-ribosyl)imidazole-4-carboxamide + L-glutamine = D-erythro-1-(imidazol-4-yl)glycerol 3-phosphate + 5-amino-1-(5-phospho-beta-D-ribosyl)imidazole-4-carboxamide + L-glutamate + H(+). The protein operates within amino-acid biosynthesis; L-histidine biosynthesis; L-histidine from 5-phospho-alpha-D-ribose 1-diphosphate: step 5/9. Functionally, IGPS catalyzes the conversion of PRFAR and glutamine to IGP, AICAR and glutamate. The HisF subunit catalyzes the cyclization activity that produces IGP and AICAR from PRFAR using the ammonia provided by the HisH subunit. The protein is Imidazole glycerol phosphate synthase subunit HisF of Dehalococcoides mccartyi (strain ATCC BAA-2266 / KCTC 15142 / 195) (Dehalococcoides ethenogenes (strain 195)).